Reading from the N-terminus, the 116-residue chain is Large ribosomal subunit protein uL18 (116 aa).

This sequence belongs to the universal ribosomal protein uL18 family. Part of the 50S ribosomal subunit; part of the 5S rRNA/L5/L18/L25 subcomplex. Contacts the 5S and 23S rRNAs.

In terms of biological role, this is one of the proteins that bind and probably mediate the attachment of the 5S RNA into the large ribosomal subunit, where it forms part of the central protuberance. In Ectopseudomonas mendocina (strain ymp) (Pseudomonas mendocina), this protein is Large ribosomal subunit protein uL18.